The following is a 459-amino-acid chain: Exodeoxyribonuclease 7 large subunit (459 aa).

Belongs to the XseA family. As to quaternary structure, heterooligomer composed of large and small subunits.

It is found in the cytoplasm. The catalysed reaction is Exonucleolytic cleavage in either 5'- to 3'- or 3'- to 5'-direction to yield nucleoside 5'-phosphates.. Functionally, bidirectionally degrades single-stranded DNA into large acid-insoluble oligonucleotides, which are then degraded further into small acid-soluble oligonucleotides. This chain is Exodeoxyribonuclease 7 large subunit, found in Pseudomonas savastanoi pv. phaseolicola (strain 1448A / Race 6) (Pseudomonas syringae pv. phaseolicola (strain 1448A / Race 6)).